A 328-amino-acid polypeptide reads, in one-letter code: Cysteine proteinase COT44 (328 aa).

The propeptide at 1–99 (MSIYLRWSLE…KYSAAVNVDE (99 aa)) is activation peptide. Asn-48 and Asn-60 each carry an N-linked (GlcNAc...) asparagine glycan. 3 disulfides stabilise this stretch: Cys-121–Cys-163, Cys-155–Cys-196, and Cys-254–Cys-305. The active site involves Cys-124. Catalysis depends on residues His-260 and Asn-280.

This sequence belongs to the peptidase C1 family. In terms of tissue distribution, present in both cotyledons and axes.

Its function is as follows. May function in an early event in cortical cell differentiation. The polypeptide is Cysteine proteinase COT44 (Brassica napus (Rape)).